The following is an 874-amino-acid chain: Alanine--tRNA ligase (874 aa).

4 residues coordinate Zn(2+): His-564, His-568, Cys-665, and His-669.

This sequence belongs to the class-II aminoacyl-tRNA synthetase family. Zn(2+) is required as a cofactor.

It localises to the cytoplasm. It catalyses the reaction tRNA(Ala) + L-alanine + ATP = L-alanyl-tRNA(Ala) + AMP + diphosphate. Catalyzes the attachment of alanine to tRNA(Ala) in a two-step reaction: alanine is first activated by ATP to form Ala-AMP and then transferred to the acceptor end of tRNA(Ala). Also edits incorrectly charged Ser-tRNA(Ala) and Gly-tRNA(Ala) via its editing domain. The sequence is that of Alanine--tRNA ligase from Cupriavidus metallidurans (strain ATCC 43123 / DSM 2839 / NBRC 102507 / CH34) (Ralstonia metallidurans).